We begin with the raw amino-acid sequence, 487 residues long: Anthocyanidin 3-O-glucosyltransferase 5 (487 aa).

Catalysis depends on His22, which acts as the Proton acceptor. His22 is an an anthocyanidin binding site. The Charge relay role is filled by Asp119. Positions 354, 369, 372, 373, 374, and 377 each coordinate UDP-alpha-D-glucose. Residue Ala392 participates in an anthocyanidin binding. Positions 393 and 394 each coordinate UDP-alpha-D-glucose.

This sequence belongs to the UDP-glycosyltransferase family. Faintly expressed in cotyledons.

The catalysed reaction is an anthocyanidin + UDP-alpha-D-glucose + H(+) = an anthocyanidin 3-O-beta-D-glucoside + UDP. The protein operates within pigment biosynthesis; anthocyanin biosynthesis. In the presence of other necessary color factors, this glycosylation reaction allows the accumulation of anthocyanin pigments. In Manihot esculenta (Cassava), this protein is Anthocyanidin 3-O-glucosyltransferase 5 (GT5).